The following is a 443-amino-acid chain: Xaa-Pro dipeptidase (443 aa).

Mn(2+) is bound by residues Asp246, Asp257, His339, Glu384, and Glu423.

Belongs to the peptidase M24B family. Bacterial-type prolidase subfamily. Mn(2+) serves as cofactor.

It catalyses the reaction Xaa-L-Pro dipeptide + H2O = an L-alpha-amino acid + L-proline. Functionally, splits dipeptides with a prolyl residue in the C-terminal position. This Escherichia coli O81 (strain ED1a) protein is Xaa-Pro dipeptidase.